Here is a 1059-residue protein sequence, read N- to C-terminus: IQ motif-containing protein H (1059 aa).

The stretch at 6 to 35 (KNKDEVGNILVKVQDDLRQLKKNIVQFTVQ) forms a coiled coil. The disordered stretch occupies residues 245–267 (MESAESRLLRAPPPSAASASSDN). An IQ domain is found at 401-430 (HQAAAVRIQTCWRRYSARTAYLIRLRSKWA).

This chain is IQ motif-containing protein H (iqch), found in Danio rerio (Zebrafish).